We begin with the raw amino-acid sequence, 375 residues long: GDSL esterase/lipase At5g45960 (375 aa).

Residues M1–S28 form the signal peptide. S54 acts as the Nucleophile in catalysis. N-linked (GlcNAc...) asparagine glycosylation is present at N340. Active-site residues include D348 and H351.

The protein belongs to the 'GDSL' lipolytic enzyme family.

It localises to the secreted. The sequence is that of GDSL esterase/lipase At5g45960 from Arabidopsis thaliana (Mouse-ear cress).